The primary structure comprises 504 residues: L-carnitine/gamma-butyrobetaine antiporter (504 aa).

12 helical membrane passes run 10 to 30 (IEPKVFFPPLIIVGILCWLTV), 51 to 71 (WGWAFEWYMVVMLFGWFWLVF), 92 to 112 (IFMMFASCTSAAVLFWGSIEI), 143 to 163 (GPLPWATYSFLSVAFAYFFFV), 195 to 215 (FYLVALIFAMGTSLGLATPLV), 231 to 251 (LDAIIITCWIILNTICVACGL), 263 to 283 (SYLSFLMLGWVFIVSGASFIM), 316 to 336 (WTVFYWAWWVIYAIQMSIFLA), 347 to 367 (LCFGMVLGLTASTWILWTVLG), 398 to 418 (WAALPLSTATMWGFFILCFIA), 446 to 466 (LLVRIGWSVLVGIIGIVLLAL), and 475 to 495 (AIIAGGCPLFFVNIMVTLSFI).

The protein belongs to the BCCT transporter (TC 2.A.15) family. CaiT subfamily. As to quaternary structure, homotrimer.

The protein localises to the cell inner membrane. The catalysed reaction is 4-(trimethylamino)butanoate(in) + (R)-carnitine(out) = 4-(trimethylamino)butanoate(out) + (R)-carnitine(in). It participates in amine and polyamine metabolism; carnitine metabolism. Catalyzes the exchange of L-carnitine for gamma-butyrobetaine. The protein is L-carnitine/gamma-butyrobetaine antiporter of Escherichia coli O81 (strain ED1a).